The sequence spans 299 residues: tRNA dimethylallyltransferase (299 aa).

11 to 18 lines the ATP pocket; it reads GPTAVGKT. Position 13–18 (13–18) interacts with substrate; it reads TAVGKT. Positions 36 to 39 are interaction with substrate tRNA; sequence DSQQ.

The protein belongs to the IPP transferase family. In terms of assembly, monomer. It depends on Mg(2+) as a cofactor.

It carries out the reaction adenosine(37) in tRNA + dimethylallyl diphosphate = N(6)-dimethylallyladenosine(37) in tRNA + diphosphate. In terms of biological role, catalyzes the transfer of a dimethylallyl group onto the adenine at position 37 in tRNAs that read codons beginning with uridine, leading to the formation of N6-(dimethylallyl)adenosine (i(6)A). In Streptococcus pyogenes serotype M28 (strain MGAS6180), this protein is tRNA dimethylallyltransferase.